A 213-amino-acid polypeptide reads, in one-letter code: Glycerol-3-phosphate acyltransferase (213 aa).

A run of 6 helical transmembrane segments spans residues 2–22, 52–74, 81–100, 112–132, 143–163, and 164–184; these read ITIV…GLWI, AGMA…PIIF, PLIF…FAGF, VIFG…FGAL, VTAS…GFIL, and SNYD…IIIR.

It belongs to the PlsY family. As to quaternary structure, probably interacts with PlsX.

The protein resides in the cell membrane. The catalysed reaction is an acyl phosphate + sn-glycerol 3-phosphate = a 1-acyl-sn-glycero-3-phosphate + phosphate. Its pathway is lipid metabolism; phospholipid metabolism. In terms of biological role, catalyzes the transfer of an acyl group from acyl-phosphate (acyl-PO(4)) to glycerol-3-phosphate (G3P) to form lysophosphatidic acid (LPA). This enzyme utilizes acyl-phosphate as fatty acyl donor, but not acyl-CoA or acyl-ACP. The chain is Glycerol-3-phosphate acyltransferase from Streptococcus pneumoniae (strain CGSP14).